Consider the following 185-residue polypeptide: Ribosome-recycling factor (185 aa).

The protein belongs to the RRF family.

The protein resides in the cytoplasm. Its function is as follows. Responsible for the release of ribosomes from messenger RNA at the termination of protein biosynthesis. May increase the efficiency of translation by recycling ribosomes from one round of translation to another. This chain is Ribosome-recycling factor, found in Buchnera aphidicola subsp. Acyrthosiphon pisum (strain Tuc7).